A 499-amino-acid polypeptide reads, in one-letter code: MSLADELLADLEEAAEEEEGGSYGEEEEEPAIEDVQEETQLDLSGDSVKSIAKLWDSKMFAEIMMKIEEYISKQANVSEVMGPVEAAPEYRVIVDANNLTVEIENELNIIHKFIRDKYSKRFPELESLVPNALDYIRTVKELGNSLDKCKNNENLQQILTNATIMVVSVTASTTQGQQLSDEELERLEEACDMALELNASKHRIYEYVESRMSFIAPNLSIIIGASTAAKIMGVAGGLTNLSKMPACNIMLLGAQRKTLSGFSSTSVLPHTGYIYHSDIVQSLPPDLRRKAARLVAAKCTLAARVDSFHESTEGKVGYELKDEIERKFDKWQEPPPVKQVKPLPAPLDGQRKKRGGRRYRKMKERLGLTEIRKQANRMSFGEIEEDAYQEDLGFSLGHLGKSGSGRVRQTQVNEATKARISKTLQRTLQKQSVVYGGKSTIRDRSSGTASSVAFTPLQGLEIVNPQAAEKKVAEANQKYFSSMAEFLKVKGEKSGTMST.

The segment at 1-43 is disordered; that stretch reads MSLADELLADLEEAAEEEEGGSYGEEEEEPAIEDVQEETQLDL. The segment covering 7 to 40 has biased composition (acidic residues); that stretch reads LLADLEEAAEEEEGGSYGEEEEEPAIEDVQEETQ. Coiled coils occupy residues 85 to 120 and 181 to 215; these read EAAP…KYSK and DEEL…MSFI. The 119-residue stretch at 215–333 folds into the Nop domain; sequence IAPNLSIIIG…IERKFDKWQE (119 aa). Residues 334–357 form a disordered region; sequence PPPVKQVKPLPAPLDGQRKKRGGR. The Nuclear localization signal (NLS) motif lies at 351–364; it reads RKKRGGRRYRKMKE. Phosphoserine occurs at positions 379, 395, and 432. Lys-438 is modified (N6-acetyllysine). Ser-439 carries the phosphoserine modification. Thr-440 carries the post-translational modification Phosphothreonine. The residue at position 450 (Ser-450) is a Phosphoserine. A Phosphothreonine modification is found at Thr-455. Residues Lys-471 and Lys-478 each participate in a glycyl lysine isopeptide (Lys-Gly) (interchain with G-Cter in SUMO2) cross-link.

The protein belongs to the PRP31 family. In terms of assembly, identified in the spliceosome B complex. Component of the U4/U6-U5 tri-snRNP complex composed of the U4, U6 and U5 snRNAs and at least PRPF3, PRPF4, PRPF6, PRPF8, PRPF31, SNRNP200, TXNL4A, SNRNP40, DDX23, CD2BP2, PPIH, SNU13, EFTUD2, SART1 and USP39. Interacts with a complex formed by SNU13 and U4 snRNA, but not with SNU13 or U4 snRNA alone. The complex formed by SNU13 and PRPF31 also binds U4atac snRNA, a characteristic component of specific, less abundant spliceosomal complexes. Interacts with PRPF6/U5 snRNP-associated 102 kDa protein. Component of some MLL1/MLL complex, at least composed of the core components KMT2A/MLL1, ASH2L, HCFC1/HCF1, WDR5 and RBBP5, as well as the facultative components BACC1, CHD8, E2F6, HSP70, INO80C, KANSL1, LAS1L, MAX, MCRS1, MGA, KAT8/MOF, PELP1, PHF20, PRP31, RING2, RUVB1/TIP49A, RUVB2/TIP49B, SENP3, TAF1, TAF4, TAF6, TAF7, TAF9 and TEX10. Interacts (via its NLS) with CTNNBL1. Interacts with USH1G. Phosphorylated by PRP4K during spliceosome assembly.

The protein resides in the nucleus. It localises to the nucleus speckle. It is found in the cajal body. Functionally, involved in pre-mRNA splicing as component of the spliceosome. Required for the assembly of the U4/U5/U6 tri-snRNP complex, one of the building blocks of the spliceosome. This is U4/U6 small nuclear ribonucleoprotein Prp31 (Prpf31) from Mus musculus (Mouse).